A 255-amino-acid polypeptide reads, in one-letter code: Taurine import ATP-binding protein TauB (255 aa).

The ABC transporter domain maps to 2–229 (LQISHLYADY…RFVAGESSRS (228 aa)). 34-41 (GPSGCGKT) contributes to the ATP binding site.

Belongs to the ABC transporter superfamily. Taurine importer (TC 3.A.1.17.1) family. In terms of assembly, the complex is composed of two ATP-binding proteins (TauB), two transmembrane proteins (TauC) and a solute-binding protein (TauA).

It is found in the cell inner membrane. The enzyme catalyses taurine(out) + ATP + H2O = taurine(in) + ADP + phosphate + H(+). In terms of biological role, part of the ABC transporter complex TauABC involved in taurine import. Responsible for energy coupling to the transport system. This is Taurine import ATP-binding protein TauB from Shigella boydii serotype 4 (strain Sb227).